The following is a 158-amino-acid chain: Low molecular weight phosphotyrosine protein phosphatase (158 aa).

Alanine 2 is modified (N-acetylalanine). Catalysis depends on cysteine 13, which acts as the Nucleophile. Arginine 19 is a catalytic residue. The active-site Proton donor is aspartate 130. Phosphotyrosine occurs at positions 132 and 133.

Belongs to the low molecular weight phosphotyrosine protein phosphatase family. As to quaternary structure, interacts with EPHA2; dephosphorylates EPHA2. Interacts with EPHB1. Interacts with the SH3 domain of SPTAN1. Phosphorylated by LCK. Phosphorylation at Tyr-132 increases its phosphatase activity.

It localises to the cytoplasm. The enzyme catalyses O-phospho-L-tyrosyl-[protein] + H2O = L-tyrosyl-[protein] + phosphate. The catalysed reaction is a phosphate monoester + H2O = an alcohol + phosphate. Its activity is regulated as follows. Inhibited by sulfhydryl reagents. In terms of biological role, acts on tyrosine phosphorylated proteins, low-MW aryl phosphates and natural and synthetic acyl phosphates with differences in substrate specificity between isoform 1 and isoform 2. In Sus scrofa (Pig), this protein is Low molecular weight phosphotyrosine protein phosphatase (ACP1).